We begin with the raw amino-acid sequence, 155 residues long: Small ribosomal subunit protein uS7c (155 aa).

The protein belongs to the universal ribosomal protein uS7 family. Part of the 30S ribosomal subunit.

It localises to the plastid. The protein resides in the chloroplast. Functionally, one of the primary rRNA binding proteins, it binds directly to 16S rRNA where it nucleates assembly of the head domain of the 30S subunit. The chain is Small ribosomal subunit protein uS7c from Beta vulgaris (Sugar beet).